Here is a 396-residue protein sequence, read N- to C-terminus: 2,3-diketo-5-methylthiopentyl-1-phosphate enolase (396 aa).

The active-site Proton acceptor is lysine 85. Substrate is bound by residues lysine 134, lysine 160–glutamate 163, histidine 251, glycine 323, and glycine 345–glycine 346. Lysine 160, aspartate 162, and glutamate 163 together coordinate Mg(2+). Lysine 160 bears the N6-carboxylysine mark.

It belongs to the RuBisCO large chain family. Type IV subfamily. In terms of assembly, homodimer. It depends on Mg(2+) as a cofactor.

The enzyme catalyses 5-methylsulfanyl-2,3-dioxopentyl phosphate = 2-hydroxy-5-methylsulfanyl-3-oxopent-1-enyl phosphate. It participates in amino-acid biosynthesis; L-methionine biosynthesis via salvage pathway; L-methionine from S-methyl-5-thio-alpha-D-ribose 1-phosphate: step 3/6. Catalyzes the enolization of 2,3-diketo-5-methylthiopentyl-1-phosphate (DK-MTP-1-P) into 2-hydroxy-3-keto-5-methylthiopentenyl-1-phosphate (HK-MTPenyl-1-P). This chain is 2,3-diketo-5-methylthiopentyl-1-phosphate enolase, found in Exiguobacterium sibiricum (strain DSM 17290 / CCUG 55495 / CIP 109462 / JCM 13490 / 255-15).